The chain runs to 419 residues: Gamma-glutamyl phosphate reductase (419 aa).

It belongs to the gamma-glutamyl phosphate reductase family.

The protein resides in the cytoplasm. It catalyses the reaction L-glutamate 5-semialdehyde + phosphate + NADP(+) = L-glutamyl 5-phosphate + NADPH + H(+). The protein operates within amino-acid biosynthesis; L-proline biosynthesis; L-glutamate 5-semialdehyde from L-glutamate: step 2/2. Its function is as follows. Catalyzes the NADPH-dependent reduction of L-glutamate 5-phosphate into L-glutamate 5-semialdehyde and phosphate. The product spontaneously undergoes cyclization to form 1-pyrroline-5-carboxylate. This Maridesulfovibrio salexigens (strain ATCC 14822 / DSM 2638 / NCIMB 8403 / VKM B-1763) (Desulfovibrio salexigens) protein is Gamma-glutamyl phosphate reductase.